A 504-amino-acid chain; its full sequence is Maturase K (504 aa).

The protein belongs to the intron maturase 2 family. MatK subfamily.

The protein localises to the plastid. It localises to the chloroplast. Functionally, usually encoded in the trnK tRNA gene intron. Probably assists in splicing its own and other chloroplast group II introns. The sequence is that of Maturase K from Nepenthes alata (Winged pitcher plant).